Here is a 184-residue protein sequence, read N- to C-terminus: MDRGEQGLLRTDTVPEEAEDAAATISATETLSEEEQEELRRELAKVEEEIQTLSQVLAAREKHLAEIKRKLGINSLQELKQNIAKGWQDVTATSAYKKTSETLSQAGQKASAAFSSVGSVITKKLEDVKNSPTFKSFEEKVENLKSKVGGTKPAGGDFGEVLNSTANASATSGEPVPEQTQEGL.

Residues M1–L43 form a disordered region. A coiled-coil region spans residues A22–N74. The residue at position 136 (S136) is a Phosphoserine. Residues K147 to L184 are disordered. A compositionally biased stretch (polar residues) spans L162–L184.

Belongs to the TPD52 family. Forms a homodimer or heterodimer with other members of the family. Post-translationally, phosphorylated in a calcium/calmodulin-dependent manner.

The chain is Tumor protein D52 (TPD52) from Oryctolagus cuniculus (Rabbit).